The primary structure comprises 238 residues: MESLSELQNPLLPRSPTHLHGPYPYPEASPAWPCREKIYSYLLGGAGPAHAHQLLDPGSLQLAVEAWYRPSCLLGRDKVKEPRPGSCETSFTEGREPPAGPTERSTEPGQAEEDVAIQTVSYGVQEEFQGQEGDPEEEESDATSTESESEDNFLTLPPRDHLGLTIFSMLCCFWPLGIAAFYFSQGTSKAISKGDFRLANTTSRRALFLATLSIAVGAGLYVAVVVALAAYMSQNGHS.

3 disordered regions span residues 1-24 (MESL…GPYP), 78-111 (KVKE…PGQA), and 126-155 (EEFQ…NFLT). The Extracellular segment spans residues 1–162 (MESLSELQNP…FLTLPPRDHL (162 aa)). Residues 133-151 (GDPEEEESDATSTESESED) are compositionally biased toward acidic residues. A helical membrane pass occupies residues 163–183 (GLTIFSMLCCFWPLGIAAFYF). The Cytoplasmic portion of the chain corresponds to 184 to 205 (SQGTSKAISKGDFRLANTTSRR). Residues 206 to 226 (ALFLATLSIAVGAGLYVAVVV) traverse the membrane as a helical segment. The Extracellular portion of the chain corresponds to 227–238 (ALAAYMSQNGHS).

Belongs to the CD225/Dispanin family.

Its subcellular location is the membrane. It is found in the golgi apparatus. The protein localises to the cis-Golgi network. The sequence is that of Synapse differentiation-inducing gene protein 1-like (SYNDIG1L) from Bos taurus (Bovine).